Here is a 299-residue protein sequence, read N- to C-terminus: Glutamyl-Q tRNA(Asp) synthetase (299 aa).

L-glutamate contacts are provided by residues 18-22 (RFAPS) and Glu54. The 'HIGH' region signature appears at 21-31 (PSPSGALHFGS). 4 residues coordinate Zn(2+): Cys110, Cys112, Tyr124, and Cys128. L-glutamate is bound by residues Tyr181 and Arg199. Positions 237–241 (KLSKQ) match the 'KMSKS' region motif. Lys240 contributes to the ATP binding site.

It belongs to the class-I aminoacyl-tRNA synthetase family. GluQ subfamily. Zn(2+) is required as a cofactor.

Functionally, catalyzes the tRNA-independent activation of glutamate in presence of ATP and the subsequent transfer of glutamate onto a tRNA(Asp). Glutamate is transferred on the 2-amino-5-(4,5-dihydroxy-2-cyclopenten-1-yl) moiety of the queuosine in the wobble position of the QUC anticodon. This Shewanella oneidensis (strain ATCC 700550 / JCM 31522 / CIP 106686 / LMG 19005 / NCIMB 14063 / MR-1) protein is Glutamyl-Q tRNA(Asp) synthetase.